A 218-amino-acid chain; its full sequence is Pyridoxine/pyridoxamine 5'-phosphate oxidase (218 aa).

Residues 14–17 (RREY) and lysine 72 contribute to the substrate site. Residues 67-72 (RIVLLK), 82-83 (YT), arginine 88, lysine 89, and glutamine 111 each bind FMN. Substrate-binding residues include tyrosine 129, arginine 133, and serine 137. FMN is bound by residues 146 to 147 (QS) and tryptophan 191. Position 197–199 (197–199 (RLH)) interacts with substrate. An FMN-binding site is contributed by arginine 201.

The protein belongs to the pyridoxamine 5'-phosphate oxidase family. Homodimer. The cofactor is FMN.

The catalysed reaction is pyridoxamine 5'-phosphate + O2 + H2O = pyridoxal 5'-phosphate + H2O2 + NH4(+). The enzyme catalyses pyridoxine 5'-phosphate + O2 = pyridoxal 5'-phosphate + H2O2. Its pathway is cofactor metabolism; pyridoxal 5'-phosphate salvage; pyridoxal 5'-phosphate from pyridoxamine 5'-phosphate: step 1/1. It participates in cofactor metabolism; pyridoxal 5'-phosphate salvage; pyridoxal 5'-phosphate from pyridoxine 5'-phosphate: step 1/1. In terms of biological role, catalyzes the oxidation of either pyridoxine 5'-phosphate (PNP) or pyridoxamine 5'-phosphate (PMP) into pyridoxal 5'-phosphate (PLP). The chain is Pyridoxine/pyridoxamine 5'-phosphate oxidase from Salmonella paratyphi B (strain ATCC BAA-1250 / SPB7).